The sequence spans 214 residues: RNA-free ribonuclease P (214 aa).

It belongs to the HARP family.

The catalysed reaction is Endonucleolytic cleavage of RNA, removing 5'-extranucleotides from tRNA precursor.. RNA-free RNase P that catalyzes the removal of the 5'-leader sequence from pre-tRNA to produce the mature 5'-terminus. The sequence is that of RNA-free ribonuclease P from Aeropyrum pernix (strain ATCC 700893 / DSM 11879 / JCM 9820 / NBRC 100138 / K1).